We begin with the raw amino-acid sequence, 329 residues long: DNA-directed RNA polymerase subunit alpha (329 aa).

The tract at residues 1 to 235 is alpha N-terminal domain (alpha-NTD); that stretch reads MQGFVEDFLK…QQLEAFVDLR (235 aa). The alpha C-terminal domain (alpha-CTD) stretch occupies residues 249 to 329; sequence FEPVLLRPVD…NWPPKSLLED (81 aa).

The protein belongs to the RNA polymerase alpha chain family. As to quaternary structure, homodimer. The RNAP catalytic core consists of 2 alpha, 1 beta, 1 beta' and 1 omega subunit. When a sigma factor is associated with the core the holoenzyme is formed, which can initiate transcription.

The catalysed reaction is RNA(n) + a ribonucleoside 5'-triphosphate = RNA(n+1) + diphosphate. Its function is as follows. DNA-dependent RNA polymerase catalyzes the transcription of DNA into RNA using the four ribonucleoside triphosphates as substrates. The protein is DNA-directed RNA polymerase subunit alpha of Buchnera aphidicola subsp. Cinara cedri (strain Cc).